Consider the following 206-residue polypeptide: Large ribosomal subunit protein uL13 (206 aa).

The protein belongs to the universal ribosomal protein uL13 family.

The chain is Large ribosomal subunit protein uL13 (RPL13A) from Picea mariana (Black spruce).